Reading from the N-terminus, the 175-residue chain is Peptide deformylase 1 (175 aa).

The Fe cation site is built by Cys99 and His141. Residue Glu142 is part of the active site. Residue His145 coordinates Fe cation.

It belongs to the polypeptide deformylase family. Requires Fe(2+) as cofactor.

It catalyses the reaction N-terminal N-formyl-L-methionyl-[peptide] + H2O = N-terminal L-methionyl-[peptide] + formate. In terms of biological role, removes the formyl group from the N-terminal Met of newly synthesized proteins. Requires at least a dipeptide for an efficient rate of reaction. N-terminal L-methionine is a prerequisite for activity but the enzyme has broad specificity at other positions. In Rickettsia conorii (strain ATCC VR-613 / Malish 7), this protein is Peptide deformylase 1.